A 466-amino-acid polypeptide reads, in one-letter code: Phosphomethylpyrimidine synthase (466 aa).

Residues asparagine 80, methionine 109, tyrosine 139, histidine 175, 195–197, 236–239, and glutamate 275 each bind substrate; these read SRG and DSLR. Histidine 279 is a Zn(2+) binding site. Residue tyrosine 302 participates in substrate binding. A Zn(2+)-binding site is contributed by histidine 343. [4Fe-4S] cluster-binding residues include cysteine 423, cysteine 426, and cysteine 431.

It belongs to the ThiC family. Requires [4Fe-4S] cluster as cofactor.

It catalyses the reaction 5-amino-1-(5-phospho-beta-D-ribosyl)imidazole + S-adenosyl-L-methionine = 4-amino-2-methyl-5-(phosphooxymethyl)pyrimidine + CO + 5'-deoxyadenosine + formate + L-methionine + 3 H(+). It functions in the pathway cofactor biosynthesis; thiamine diphosphate biosynthesis. In terms of biological role, catalyzes the synthesis of the hydroxymethylpyrimidine phosphate (HMP-P) moiety of thiamine from aminoimidazole ribotide (AIR) in a radical S-adenosyl-L-methionine (SAM)-dependent reaction. In Prochlorococcus marinus (strain NATL1A), this protein is Phosphomethylpyrimidine synthase.